Reading from the N-terminus, the 602-residue chain is Na(+)/dicarboxylate cotransporter 3 (602 aa).

The Cytoplasmic segment spans residues 1–16; it reads MAALAAAAKKVWSARR. Residues 17–37 form a helical membrane-spanning segment; sequence LLVLLFTPLALLPVVFALPPK. Topologically, residues 38–55 are extracellular; the sequence is EGRCLFVILLMAVYWCTE. A helical membrane pass occupies residues 56–76; sequence ALPLSVTALLPIVLFPFMGIL. At 77-82 the chain is on the cytoplasmic side; that stretch reads PSNKVC. The chain crosses the membrane as a helical span at residues 83-103; it reads PQYFLDTNFLFLSGLIMASAI. Residues 104 to 137 lie on the Extracellular side of the membrane; it reads EEWNLHRRIALKILMLVGVQPARLILGMMVTTSF. A helical transmembrane segment spans residues 138 to 158; the sequence is LSMWLSNTASTAMMLPIANAI. Over 159-229 the chain is Cytoplasmic; it reads LKSLFGQKEV…SRKEDEYRRN (71 aa). The helical transmembrane segment at 230-250 threads the bilayer; that stretch reads IWKGFLISIPYSASIGGTATL. The Extracellular segment spans residues 251-278; the sequence is TGTAPNLILLGQLKSFFPQCDVVNFGSW. Residues 279–299 traverse the membrane as a helical segment; that stretch reads FIFAFPLMLLFLLAGWLWISF. Residues 300 to 336 lie on the Cytoplasmic side of the membrane; the sequence is LYGGLSFRGWRKNKSEIRTNAEDRARAVIREEYQNLG. The helical transmembrane segment at 337-357 threads the bilayer; sequence PIKFAEQAVFILFCMFAILLF. Residues 358–372 are Extracellular-facing; the sequence is TRDPKFIPGWASLFN. The chain crosses the membrane as a helical span at residues 373–393; the sequence is PGFLSDAVTGVAIVTILFFFP. Over 394–422 the chain is Cytoplasmic; that stretch reads SQRPSLKWWFDFKAPNTETEPLLTWKKAQ. An intramembrane region (helical) is located at residues 423-443; it reads ETVPWNIILLLGGGFAMAKGC. Over 444–461 the chain is Cytoplasmic; it reads EESGLSVWIGGQLHPLEN. Residues 462-482 form a helical membrane-spanning segment; sequence VPPALAVLLITVVIAFFTEFA. Topologically, residues 483-505 are extracellular; the sequence is SNTATIIIFLPVLAELAIRLRVH. A helical transmembrane segment spans residues 506–526; the sequence is PLYLMIPGTVGCSFAFMLPVS. The Cytoplasmic portion of the chain corresponds to 527–546; that stretch reads TPPNSIAFASGHLLVKDMVR. Residues 547-567 form a helical membrane-spanning segment; the sequence is TGLLMNLMGVLLLSLAMNTWA. Residues 568-602 are Extracellular-facing; sequence QTIFQLGTFPDWADMYSVNVTALPPTLANDTFRTL. N-linked (GlcNAc...) asparagine glycosylation is found at Asn-586 and Asn-596.

This sequence belongs to the SLC13A/DASS transporter (TC 2.A.47) family. NADC subfamily. In terms of tissue distribution, expression is highest in kidney. Detected in placenta, brain, liver and pancreas.

Its subcellular location is the cell membrane. The enzyme catalyses succinate(out) + 3 Na(+)(out) = succinate(in) + 3 Na(+)(in). It carries out the reaction 2-oxoglutarate(out) + 3 Na(+)(out) = 2-oxoglutarate(in) + 3 Na(+)(in). The catalysed reaction is N-acetyl-L-aspartate(out) + 3 Na(+)(out) = N-acetyl-L-aspartate(in) + 3 Na(+)(in). It catalyses the reaction glutarate(out) + 3 Na(+)(out) = glutarate(in) + 3 Na(+)(in). The enzyme catalyses fumarate(out) + 3 Na(+)(out) = fumarate(in) + 3 Na(+)(in). It carries out the reaction malate(out) + 3 Na(+)(out) = malate(in) + 3 Na(+)(in). The catalysed reaction is 2,2-dimethylsuccinate(out) + 3 Na(+)(out) = 2,2-dimethylsuccinate(in) + 3 Na(+)(in). It catalyses the reaction 2,3-dimethylsuccinate(out) + 3 Na(+)(out) = 2,3-dimethylsuccinate(in) + 3 Na(+)(in). The enzyme catalyses itaconate(out) + 3 Na(+)(out) = itaconate(in) + 3 Na(+)(in). With respect to regulation, li(+) decreases succinate transport in the presence of Na(+). Its function is as follows. High-affinity sodium-dicarboxylate cotransporter that accepts a range of substrates with 4-6 carbon atoms, such as the citric acid cycle intermediates succinate and alpha-ketoglutarate (2-oxoglutarate), as well as other compounds including N-acetyl-L-aspartate. Transports the dicarboxylate into the cell with a probable stoichiometry of 3 Na(+) for 1 divalent dicarboxylate, rendering the process electrogenic. Can transport citrate in a Na(+)-dependent manner, recognizing the divalent form of citrate rather than the trivalent form which is normally found in blood. Imports itaconate in hepatocytes leading to activation of TFEB-dependent lysosomal biogenesis involved in antibacterial innate immune response. This is Na(+)/dicarboxylate cotransporter 3 (SLC13A3) from Homo sapiens (Human).